The following is a 618-amino-acid chain: Vacuolar-sorting receptor 5 (618 aa).

The signal sequence occupies residues methionine 1–glycine 23. Residues phenylalanine 24–arginine 563 lie on the Lumenal side of the membrane. Residues lysine 58–leucine 164 enclose the PA domain. Asparagine 81, asparagine 293, and asparagine 430 each carry an N-linked (GlcNAc...) asparagine glycan. EGF-like domains lie at glutamate 412–lysine 462 and glycine 465–glutamate 511. 7 disulfides stabilise this stretch: cysteine 416/cysteine 434, cysteine 423/cysteine 443, cysteine 445/cysteine 461, cysteine 469/cysteine 489, cysteine 476/cysteine 497, cysteine 499/cysteine 510, and cysteine 540/cysteine 553. One can recognise an EGF-like 3; calcium-binding domain in the interval aspartate 512–isoleucine 554. Asparagine 542 carries an N-linked (GlcNAc...) asparagine glycan. A helical membrane pass occupies residues glycine 564–phenylalanine 584. At tyrosine 585–lysine 618 the chain is on the cytoplasmic side. The Tyrosine-based internalization motif signature appears at tyrosine 604–leucine 607.

It belongs to the VSR (BP-80) family. Expressed in seedlings, roots, leaves, flowers and siliques.

It localises to the membrane. It is found in the golgi apparatus membrane. The protein resides in the cytoplasmic vesicle. Its subcellular location is the clathrin-coated vesicle membrane. The protein localises to the prevacuolar compartment membrane. Functionally, vacuolar-sorting receptor (VSR) involved in clathrin-coated vesicles sorting from Golgi apparatus to vacuoles. This is Vacuolar-sorting receptor 5 (VSR5) from Arabidopsis thaliana (Mouse-ear cress).